We begin with the raw amino-acid sequence, 109 residues long: Putative double-stranded DNA mimic protein KPK_2119 (109 aa).

The protein belongs to the putative dsDNA mimic protein family.

Its function is as follows. May act as a double-stranded DNA (dsDNA) mimic. Probably regulates the activity of a dsDNA-binding protein. The chain is Putative double-stranded DNA mimic protein KPK_2119 from Klebsiella pneumoniae (strain 342).